A 553-amino-acid chain; its full sequence is HTH-type transcriptional regulator SgrR (553 aa).

The 117-residue stretch at 1 to 117 (MPSSRLQQQF…LSQIERRFRQ (117 aa)) folds into the HTH marR-type domain. The segment at residues 26 to 49 (LQELANVLHCSKRHIRSLLNNMQK) is a DNA-binding region (H-T-H motif). The interval 163–494 (EPEADLAHHW…NDLSKEVSQW (332 aa)) is solute-binding.

Functionally, activates the small RNA gene sgrS under glucose-phosphate stress conditions as well as yfdZ. Represses its own transcription under both stress and non-stress conditions. Might act as a sensor of the intracellular accumulation of phosphoglucose by binding these molecules in its C-terminal solute-binding domain. This is HTH-type transcriptional regulator SgrR from Photorhabdus laumondii subsp. laumondii (strain DSM 15139 / CIP 105565 / TT01) (Photorhabdus luminescens subsp. laumondii).